A 205-amino-acid polypeptide reads, in one-letter code: ATP-dependent Clp protease proteolytic subunit 2 (205 aa).

Catalysis depends on Ser-100, which acts as the Nucleophile. The active site involves His-125.

The protein belongs to the peptidase S14 family. As to quaternary structure, fourteen ClpP subunits assemble into 2 heptameric rings which stack back to back to give a disk-like structure with a central cavity, resembling the structure of eukaryotic proteasomes.

The protein resides in the cytoplasm. It catalyses the reaction Hydrolysis of proteins to small peptides in the presence of ATP and magnesium. alpha-casein is the usual test substrate. In the absence of ATP, only oligopeptides shorter than five residues are hydrolyzed (such as succinyl-Leu-Tyr-|-NHMec, and Leu-Tyr-Leu-|-Tyr-Trp, in which cleavage of the -Tyr-|-Leu- and -Tyr-|-Trp bonds also occurs).. In terms of biological role, cleaves peptides in various proteins in a process that requires ATP hydrolysis. Has a chymotrypsin-like activity. Plays a major role in the degradation of misfolded proteins. In Chlamydia abortus (strain DSM 27085 / S26/3) (Chlamydophila abortus), this protein is ATP-dependent Clp protease proteolytic subunit 2.